Here is a 638-residue protein sequence, read N- to C-terminus: 1-deoxy-D-xylulose-5-phosphate synthase (638 aa).

Residues H77 and 118-120 (AHA) each bind thiamine diphosphate. D149 is a Mg(2+) binding site. Thiamine diphosphate-binding positions include 150-151 (GS), N178, Y287, and E369. N178 serves as a coordination point for Mg(2+).

The protein belongs to the transketolase family. DXPS subfamily. As to quaternary structure, homodimer. Mg(2+) serves as cofactor. Requires thiamine diphosphate as cofactor.

The catalysed reaction is D-glyceraldehyde 3-phosphate + pyruvate + H(+) = 1-deoxy-D-xylulose 5-phosphate + CO2. Its pathway is metabolic intermediate biosynthesis; 1-deoxy-D-xylulose 5-phosphate biosynthesis; 1-deoxy-D-xylulose 5-phosphate from D-glyceraldehyde 3-phosphate and pyruvate: step 1/1. Catalyzes the acyloin condensation reaction between C atoms 2 and 3 of pyruvate and glyceraldehyde 3-phosphate to yield 1-deoxy-D-xylulose-5-phosphate (DXP). The sequence is that of 1-deoxy-D-xylulose-5-phosphate synthase from Phenylobacterium zucineum (strain HLK1).